We begin with the raw amino-acid sequence, 254 residues long: SLA class II histocompatibility antigen, DQ haplotype C alpha chain (254 aa).

A signal peptide spans 1-23; sequence MVPGRVLMWGALALTTVMSACGG. The alpha-1 stretch occupies residues 24-120; that stretch reads EDIAADHVAS…KVPEVTVFSK (97 aa). Residues 24 to 216 lie on the Extracellular side of the membrane; the sequence is EDIAADHVAS…IPAPMSELTE (193 aa). 2 N-linked (GlcNAc...) asparagine glycosylation sites follow: Asn-104 and Asn-144. The Ig-like C1-type domain occupies 113-204; sequence PEVTVFSKSP…LDKPLLKHWE (92 aa). Positions 121-203 are alpha-2; it reads SPVILGQPNT…GLDKPLLKHW (83 aa). Cys-133 and Cys-188 are joined by a disulfide. The tract at residues 204–216 is connecting peptide; sequence EPEIPAPMSELTE. A helical membrane pass occupies residues 217–239; that stretch reads TVVCALGLIVGLVGIVVGTVFII. Topologically, residues 240 to 254 are cytoplasmic; sequence QGLRSGGPSRHQGSL.

It belongs to the MHC class II family.

The protein localises to the membrane. The polypeptide is SLA class II histocompatibility antigen, DQ haplotype C alpha chain (Sus scrofa (Pig)).